Consider the following 149-residue polypeptide: MDKITGPFRKSKKSFRKPLPPIQSGDRIDYQNIDVLRRFISQQGKILSRRVNRLTLKQQRLLNLAIKQARILSFLPFTNTESLEKMKARIREARLKAEEVRLKNKEARLKKAKDARLKAKEARNQKKTTLRKIFINPKTSKLNTETSQT.

The tract at residues 1 to 23 is disordered; it reads MDKITGPFRKSKKSFRKPLPPIQ.

This sequence belongs to the bacterial ribosomal protein bS18 family. Part of the 30S ribosomal subunit.

It is found in the plastid. This Cuscuta obtusiflora (Peruvian dodder) protein is Small ribosomal subunit protein bS18c.